The sequence spans 336 residues: Large ribosomal subunit protein uL3 (336 aa).

A disordered region spans residues 1–34 (MVRHHQPRKGSVAFSPRKRAAKETPRIKSWPQND).

This sequence belongs to the universal ribosomal protein uL3 family. As to quaternary structure, part of the 50S ribosomal subunit. Forms a cluster with proteins L14 and L24e.

Its function is as follows. One of the primary rRNA binding proteins, it binds directly near the 3'-end of the 23S rRNA, where it nucleates assembly of the 50S subunit. The sequence is that of Large ribosomal subunit protein uL3 from Methanobrevibacter smithii (strain ATCC 35061 / DSM 861 / OCM 144 / PS).